Here is a 225-residue protein sequence, read N- to C-terminus: Probable proteasome subunit beta type-6 (225 aa).

The protein belongs to the peptidase T1B family. As to quaternary structure, the 26S proteasome consists of a 20S proteasome core and two 19S regulatory subunits. The 20S proteasome core is composed of 28 subunits that are arranged in four stacked rings, resulting in a barrel-shaped structure. The two end rings are each formed by seven alpha subunits, and the two central rings are each formed by seven beta subunits. The catalytic chamber with the active sites is on the inside of the barrel.

It is found in the cytoplasm. The protein resides in the nucleus. Functionally, non-catalytic component of the proteasome, a multicatalytic proteinase complex which is characterized by its ability to cleave peptides with Arg, Phe, Tyr, Leu, and Glu adjacent to the leaving group at neutral or slightly basic pH. The proteasome has an ATP-dependent proteolytic activity. In Schizosaccharomyces pombe (strain 972 / ATCC 24843) (Fission yeast), this protein is Probable proteasome subunit beta type-6 (pam1).